A 260-amino-acid polypeptide reads, in one-letter code: NAD-capped RNA hydrolase NudC (260 aa).

Residue arginine 69 coordinates substrate. The Zn(2+) site is built by cysteine 98 and cysteine 101. Glutamate 111 serves as a coordination point for substrate. Positions 116 and 119 each coordinate Zn(2+). Position 124 (tyrosine 124) interacts with substrate. Positions 125-248 constitute a Nudix hydrolase domain; that stretch reads PQIAPCIIVA…TVARRLIEDT (124 aa). The a divalent metal cation site is built by alanine 158, glutamate 174, and glutamate 178. Residues 159–180 carry the Nudix box motif; it reads GFVEVGETLEQTVVREVMEESQ. 192 to 199 lines the substrate pocket; sequence QPWPFPHS. Glutamate 219 lines the a divalent metal cation pocket. Position 241 (alanine 241) interacts with substrate.

The protein belongs to the Nudix hydrolase family. NudC subfamily. Homodimer. Mg(2+) serves as cofactor. It depends on Mn(2+) as a cofactor. Zn(2+) is required as a cofactor.

The enzyme catalyses a 5'-end NAD(+)-phospho-ribonucleoside in mRNA + H2O = a 5'-end phospho-adenosine-phospho-ribonucleoside in mRNA + beta-nicotinamide D-ribonucleotide + 2 H(+). It catalyses the reaction NAD(+) + H2O = beta-nicotinamide D-ribonucleotide + AMP + 2 H(+). It carries out the reaction NADH + H2O = reduced beta-nicotinamide D-ribonucleotide + AMP + 2 H(+). In terms of biological role, mRNA decapping enzyme that specifically removes the nicotinamide adenine dinucleotide (NAD) cap from a subset of mRNAs by hydrolyzing the diphosphate linkage to produce nicotinamide mononucleotide (NMN) and 5' monophosphate mRNA. The NAD-cap is present at the 5'-end of some mRNAs and stabilizes RNA against 5'-processing. Has preference for mRNAs with a 5'-end purine. Catalyzes the hydrolysis of a broad range of dinucleotide pyrophosphates. In Pectobacterium carotovorum subsp. carotovorum (strain PC1), this protein is NAD-capped RNA hydrolase NudC.